Reading from the N-terminus, the 427-residue chain is Glutamate-1-semialdehyde 2,1-aminomutase 1 (427 aa).

Position 267 is an N6-(pyridoxal phosphate)lysine (lysine 267).

Belongs to the class-III pyridoxal-phosphate-dependent aminotransferase family. HemL subfamily. As to quaternary structure, homodimer. Pyridoxal 5'-phosphate serves as cofactor.

The protein localises to the cytoplasm. The catalysed reaction is (S)-4-amino-5-oxopentanoate = 5-aminolevulinate. It participates in porphyrin-containing compound metabolism; protoporphyrin-IX biosynthesis; 5-aminolevulinate from L-glutamyl-tRNA(Glu): step 2/2. The protein is Glutamate-1-semialdehyde 2,1-aminomutase 1 of Macrococcus caseolyticus (strain JCSC5402) (Macrococcoides caseolyticum).